Consider the following 1241-residue polypeptide: Intraflagellar transport protein 122 homolog (1241 aa).

4 WD repeats span residues 10-50 (KAEH…QPLK), 51-91 (GHKD…LKYT), 93-129 (NDAI…VSKH), and 131-169 (SSSK…KVKI). The tract at residues 222–246 (VYSSQGSEAEEEEPEEEDDSPRDDN) is disordered. The span at 229-242 (EAEEEEPEEEDDSP) shows a compositional bias: acidic residues. 3 WD repeats span residues 278–317 (ALNF…LGTV), 319–359 (EQNS…HGLY), and 512–551 (KQAT…LLFQ).

As to quaternary structure, component of the IFT complex A (IFT-A) complex. IFT-A complex is divided into a core subcomplex composed of IFT122:IFT140:WDR19 which is associated with TULP3 and a peripheral subcomplex composed of IFT43:WDR35:TTC21B. Interacts with IFT43:WDR35; the interaction connects the 2 IFT-A subcomplexes. Interacts with IFTAP; the interaction associates IFTAP with IFT-A complex. As to expression, expressed in many tissues. Predominant expression in testis and pituitary.

It is found in the cell projection. Its subcellular location is the cilium. It localises to the cytoplasm. The protein localises to the cytoskeleton. The protein resides in the cilium basal body. As a component of the IFT complex A (IFT-A), a complex required for retrograde ciliary transport and entry into cilia of G protein-coupled receptors (GPCRs), it is required in ciliogenesis and ciliary protein trafficking. Involved in cilia formation during neuronal patterning. Acts as a negative regulator of Shh signaling. Required to recruit TULP3 to primary cilia. The protein is Intraflagellar transport protein 122 homolog of Homo sapiens (Human).